The chain runs to 611 residues: tRNA uridine 5-carboxymethylaminomethyl modification enzyme MnmG (611 aa).

G14–G19 serves as a coordination point for FAD. Residue G274 to F288 participates in NAD(+) binding.

This sequence belongs to the MnmG family. As to quaternary structure, homodimer. Heterotetramer of two MnmE and two MnmG subunits. FAD serves as cofactor.

It is found in the cytoplasm. NAD-binding protein involved in the addition of a carboxymethylaminomethyl (cmnm) group at the wobble position (U34) of certain tRNAs, forming tRNA-cmnm(5)s(2)U34. The sequence is that of tRNA uridine 5-carboxymethylaminomethyl modification enzyme MnmG from Chlamydia abortus (strain DSM 27085 / S26/3) (Chlamydophila abortus).